The following is a 510-amino-acid chain: Lysine--tRNA ligase (510 aa).

Positions 420 and 427 each coordinate Mg(2+).

This sequence belongs to the class-II aminoacyl-tRNA synthetase family. Homodimer. Mg(2+) is required as a cofactor.

It localises to the cytoplasm. The catalysed reaction is tRNA(Lys) + L-lysine + ATP = L-lysyl-tRNA(Lys) + AMP + diphosphate. The polypeptide is Lysine--tRNA ligase (Vibrio vulnificus (strain CMCP6)).